The sequence spans 590 residues: Zinc finger protein 285 (590 aa).

A KRAB domain is found at 8–86; it reads VTFKDVAVVF…WKQRIRDLTV (79 aa). The segment at 232-254 adopts a C2H2-type 1 zinc-finger fold; it reads FPCNNCGVAFADDTDPHVHHSTH. The segment at 260 to 282 adopts a C2H2-type 2; degenerate zinc-finger fold; it reads YKCDQYGKNFSQSQDLIVHCKTH. C2H2-type zinc fingers lie at residues 316-338, 344-366, 372-394, 400-422, 428-450, 456-478, 484-506, 512-534, and 540-562; these read YKCK…HRVH, YKCD…QGVH, YKCE…QRVH, YKCS…WRFH, YRCG…QRVH, YKCN…QRVH, YKCE…QRDH, YKCD…LRVH, and YKCK…QRVH.

The protein belongs to the krueppel C2H2-type zinc-finger protein family.

Its subcellular location is the nucleus. Its function is as follows. May be involved in transcriptional regulation. This Homo sapiens (Human) protein is Zinc finger protein 285 (ZNF285).